The following is a 363-amino-acid chain: Peptide chain release factor 1 (363 aa).

Glutamine 236 is subject to N5-methylglutamine. Positions 286–305 (KKEMERSTMRKSQIGSGDRS) are disordered.

The protein belongs to the prokaryotic/mitochondrial release factor family. In terms of processing, methylated by PrmC. Methylation increases the termination efficiency of RF1.

It localises to the cytoplasm. Peptide chain release factor 1 directs the termination of translation in response to the peptide chain termination codons UAG and UAA. The polypeptide is Peptide chain release factor 1 (Wolbachia pipientis subsp. Culex pipiens (strain wPip)).